The primary structure comprises 222 residues: Small ribosomal subunit protein uS3 (222 aa).

A KH type-2 domain is found at 39-107 (IRKYIKTKFY…QININIAEIK (69 aa)).

The protein belongs to the universal ribosomal protein uS3 family. Part of the 30S ribosomal subunit. Forms a tight complex with proteins S10 and S14.

Its function is as follows. Binds the lower part of the 30S subunit head. Binds mRNA in the 70S ribosome, positioning it for translation. This chain is Small ribosomal subunit protein uS3, found in Carboxydothermus hydrogenoformans (strain ATCC BAA-161 / DSM 6008 / Z-2901).